Consider the following 269-residue polypeptide: Bis(5'-nucleosyl)-tetraphosphatase, symmetrical (269 aa).

The protein belongs to the Ap4A hydrolase family.

It carries out the reaction P(1),P(4)-bis(5'-adenosyl) tetraphosphate + H2O = 2 ADP + 2 H(+). In terms of biological role, hydrolyzes diadenosine 5',5'''-P1,P4-tetraphosphate to yield ADP. In Vibrio cholerae serotype O1 (strain ATCC 39541 / Classical Ogawa 395 / O395), this protein is Bis(5'-nucleosyl)-tetraphosphatase, symmetrical.